Reading from the N-terminus, the 3164-residue chain is ORFB polyprotein (3164 aa).

The Peptidase C8 domain occupies 271–418 (MARAIGLSHA…IWNDPNILVG (148 aa)). Active-site for papain-like protease p48 activity residues include cysteine 341 and histidine 388. The next 6 membrane-spanning stretches (helical) occupy residues 684-704 (LGFL…LLPF), 791-811 (IMIA…YVPY), 823-843 (YMLL…GYAC), 1166-1186 (AGLF…AAIM), 1215-1235 (FPIF…VSAY), and 1356-1376 (ALGF…LRPP). Residues 1419–1445 (IEEKPSDAGRSEPIPDNDKQEESDYDQ) are disordered. Residues 1792–2207 (FYKSRKALKQ…AEDSADYRTW (416 aa)) form an RNA-directed RNA polymerase region. The next 3 helical transmembrane spans lie at 2494–2514 (VRIY…MHWV), 2516–2536 (LFVQ…WSFW), and 2589–2609 (LGLV…EVLF). The 146-residue stretch at 2650–2795 (ATKAIEHGHV…IPFLEPTLPK (146 aa)) folds into the Helicase ATP-binding domain. Residue 2663-2670 (AKTASGKS) coordinates ATP. Positions 2750–2753 (DEFH) match the DEFH box motif.

In the C-terminal section; belongs to the DEAD box helicase family. In terms of processing, papain-like protease p48 is autocatalytically processed. The putative RNA-directed RNA polymerase/helicase is probably further processed.

It localises to the host membrane. It catalyses the reaction RNA(n) + a ribonucleoside 5'-triphosphate = RNA(n+1) + diphosphate. It carries out the reaction ATP + H2O = ADP + phosphate + H(+). Its function is as follows. Papain-like protease p48 is a cysteine protease of the peptidase family C8. The protein is ORFB polyprotein of Cryphonectria parasitica (Chestnut blight fungus).